Reading from the N-terminus, the 807-residue chain is Leucine--tRNA ligase (807 aa).

A 'HIGH' region motif is present at residues 40–51; it reads PYPSGSGLHVGH. Positions 576-580 match the 'KMSKS' region motif; it reads KMSKS. Lys-579 contacts ATP.

It belongs to the class-I aminoacyl-tRNA synthetase family.

Its subcellular location is the cytoplasm. The catalysed reaction is tRNA(Leu) + L-leucine + ATP = L-leucyl-tRNA(Leu) + AMP + diphosphate. The sequence is that of Leucine--tRNA ligase from Chlorobaculum parvum (strain DSM 263 / NCIMB 8327) (Chlorobium vibrioforme subsp. thiosulfatophilum).